A 653-amino-acid polypeptide reads, in one-letter code: MGKVIGIDLGTTNSCVAVLEGGQPIVIANSEGGRTTPSIVGFGKSGDRLVGQLAKRQAVTNAENTIFSIKRFIGRRWEDTETERDRVPYGCVKGRDDTVDVQIRGRNYTPQEISAMILQKLKQDAENFLGEAVTQAVITVPAYFTDAQRQATKDAGTIAGLEVLRIINEPTAAALAFGLEKQDQEQLILVFDLGGGTFDVSILQLGDGVFEVKATSGNNQLGGDDFDGCVVCWMIERFQQQEKIDLAQDKMALQRLREAAEKAKIELSSMASTSINLPFITADETGPKHLEMELSRSKFEELVGQLIEATIQPMIQALKDADLKPQDIDKIILVGGSTRIPAVQNALIKFFNGKAPDRSVNPDEAVALGAAIQAGVLGGEVDNLLLLDVTPLSLGIETLGEVFTKIIERNTTIPTSKSQIFSTAVDGQTSVEIHILQGERTMARDNKSLGKFLLAGIPPASRGVPQIEVSFEIDVNGILKVAAQDKGTGREQSIRITNTGGLSTNEVERMRQEAEVFAEEDRRRKELVELKNQADNLLIIYESTLKDNGDLIGEQIKVLANEKVAQIQSVMTNPAISLKEFQQCLDDFQQTLFSIGANVYQRANTQTDDELEVMSDGSSPSDIEHPISGTLIPQFNFDFDDESTAQADYEAID.

The residue at position 197 (Thr197) is a Phosphothreonine; by autocatalysis.

Belongs to the heat shock protein 70 family.

Functionally, acts as a chaperone. The chain is Chaperone protein dnaK3 (dnaK3) from Nostoc sp. (strain PCC 7120 / SAG 25.82 / UTEX 2576).